We begin with the raw amino-acid sequence, 360 residues long: Nucleoporin SEH1-A (360 aa).

WD repeat units lie at residues 10–49 (DHKD…NWHC), 55–96 (THSG…SNDK), 111–152 (DSRT…NLSQ), 160–210 (SCKL…RKYA), 217–258 (SVSD…KELS), and 276–315 (NHNS…NWKC).

The protein belongs to the WD repeat SEC13 family. As to quaternary structure, component of the Nup107-160 subcomplex of the nuclear pore complex (NPC). The Nup107-160 subcomplex includes NUP160, NUP133, NUP107, NUP98, NUP85, NUP43, NUP37, SEH1 and SEC13. Component of the GATOR2 subcomplex, composed of MIOS, SEC13, SEH1L, WDR24 and WDR59. The GATOR2 complex interacts with CASTOR1 and CASTOR2; the interaction is negatively regulated by arginine. The GATOR2 complex interacts with SESN1, SESN2 and SESN3; the interaction is negatively regulated by amino acids.

It localises to the chromosome. It is found in the centromere. Its subcellular location is the kinetochore. The protein localises to the nucleus. The protein resides in the nuclear pore complex. It localises to the lysosome membrane. The GATOR2 complex is negatively regulated by the upstream amino acid sensors CASTOR1 and SESN2, which sequester the GATOR2 complex in absence of amino acids. In the presence of abundant amino acids, GATOR2 is released from CASTOR1 and SESN2 and activated. Its function is as follows. Component of the Nup107-160 subcomplex of the nuclear pore complex (NPC). The Nup107-160 subcomplex is required for the assembly of a functional NPC. The Nup107-160 subcomplex is also required for normal kinetochore microtubule attachment, mitotic progression and chromosome segregation. This subunit plays a role in recruitment of the Nup107-160 subcomplex to the kinetochore. In terms of biological role, as a component of the GATOR2 complex, functions as an activator of the amino acid-sensing branch of the mTORC1 signaling pathway. The GATOR2 complex indirectly activates mTORC1 through the inhibition of the GATOR1 subcomplex. GATOR2 probably acts as an E3 ubiquitin-protein ligase toward GATOR1. In the presence of abundant amino acids, the GATOR2 complex mediates ubiquitination of the NPRL2 core component of the GATOR1 complex, leading to GATOR1 inactivation. In the absence of amino acids, GATOR2 is inhibited, activating the GATOR1 complex. The protein is Nucleoporin SEH1-A (seh1l-a) of Xenopus laevis (African clawed frog).